Here is a 276-residue protein sequence, read N- to C-terminus: Large ribosomal subunit protein uL2 (276 aa).

Residues 223-276 (GVAMNPVDHPHGGGEGRGKGHHPTSPWGLPTKGYKTRRGKRPSDKFIVRRRNEV) form a disordered region. Composition is skewed to basic and acidic residues over residues 230–240 (DHPHGGGEGRG) and 263–276 (RPSDKFIVRRRNEV).

It belongs to the universal ribosomal protein uL2 family. As to quaternary structure, part of the 50S ribosomal subunit. Forms a bridge to the 30S subunit in the 70S ribosome.

Its function is as follows. One of the primary rRNA binding proteins. Required for association of the 30S and 50S subunits to form the 70S ribosome, for tRNA binding and peptide bond formation. It has been suggested to have peptidyltransferase activity; this is somewhat controversial. Makes several contacts with the 16S rRNA in the 70S ribosome. The chain is Large ribosomal subunit protein uL2 from Thermotoga neapolitana (strain ATCC 49049 / DSM 4359 / NBRC 107923 / NS-E).